A 113-amino-acid polypeptide reads, in one-letter code: Putative pterin-4-alpha-carbinolamine dehydratase (113 aa).

This sequence belongs to the pterin-4-alpha-carbinolamine dehydratase family.

It carries out the reaction (4aS,6R)-4a-hydroxy-L-erythro-5,6,7,8-tetrahydrobiopterin = (6R)-L-erythro-6,7-dihydrobiopterin + H2O. The sequence is that of Putative pterin-4-alpha-carbinolamine dehydratase from Hydrogenovibrio crunogenus (strain DSM 25203 / XCL-2) (Thiomicrospira crunogena).